Here is a 130-residue protein sequence, read N- to C-terminus: Con-Ins G2b (130 aa).

The N-terminal stretch at 1–23 (MTTSSYFLLVALGLLLYVRQSFS) is a signal peptide. Intrachain disulfides connect Cys29/Cys100, Cys41/Cys103, Cys53/Cys116, and Cys102/Cys107. At Pro34 the chain carries 4-hydroxyproline; partial. Positions 54–77 (EEEEARRGGTNDGGKKRRRASPLR) are disordered. A propeptide spans 59 to 92 (RRGGTNDGGKKRRRASPLRKRRRFISMLKARAKR) (c peptide). Residues 68–77 (KKRRRASPLR) are compositionally biased toward basic residues. Position 111 is a 4-carboxyglutamate; partial (Glu111).

Belongs to the insulin family. Heterodimer of A and B chains; disulfide-linked. In terms of tissue distribution, expressed by the venom gland.

It localises to the secreted. Functionally, this venom insulin, from a fish-hunting cone snail, facilitates prey capture by rapidly inducing hypoglycemic shock. Intraperitoneal injection of this peptide into zebrafish lowers blood glucose with the same potency than human insulin. In vivo, when applied to water, this peptide reduces overall locomotor activity of zebrafish larvae, observed as a significant decrease in the percentage of time spent swimming and movement frequency. This Conus geographus (Geography cone) protein is Con-Ins G2b.